The primary structure comprises 432 residues: MSKIVKVLGREIIDSRGNPTVEAEVHLESGFVGMAAAPSGASTGSREALELRDGDKARFLGKGVLKAVAAVNGPIAEALVGKDAKNQAEIDQIMIDLDGTDNKANFGANAILAVSLANAKAAAAAKSMPLYAHIAELNGTPGVFSMPLPMMNIINGGEHADNNVDIQEFMIQPVGAKTLKEGLRIGAEVFHNLAKVLKSKGYSTAVGDEGGFAPNLKSNAEALEVIAEAVAAAGYELGKDVTLAMDCAASEFFDKEAGIYNMKGEGKTFTSEEFNHYLAELANQFPIVSIEDGLDESDWTGFKHQTELLGDKLQLVGDDLFVTNTKILAEGIEKGVANSILIKFNQIGSLTETLAAIKMAKDAGYTAVISHRSGETEDATIADLAVGTAAGQIKTGSMSRSDRVAKYNQLIRIEEALGEKAPFNGLKEVKGQ.

Gln167 provides a ligand contact to (2R)-2-phosphoglycerate. Glu209 serves as the catalytic Proton donor. Mg(2+) is bound by residues Asp246, Glu291, and Asp318. (2R)-2-phosphoglycerate-binding residues include Lys343, Arg372, Ser373, and Lys394. The active-site Proton acceptor is Lys343.

It belongs to the enolase family. In terms of assembly, component of the RNA degradosome, a multiprotein complex involved in RNA processing and mRNA degradation. The cofactor is Mg(2+).

It is found in the cytoplasm. It localises to the secreted. Its subcellular location is the cell surface. It carries out the reaction (2R)-2-phosphoglycerate = phosphoenolpyruvate + H2O. Its pathway is carbohydrate degradation; glycolysis; pyruvate from D-glyceraldehyde 3-phosphate: step 4/5. Its function is as follows. Catalyzes the reversible conversion of 2-phosphoglycerate (2-PG) into phosphoenolpyruvate (PEP). It is essential for the degradation of carbohydrates via glycolysis. In Aliivibrio fischeri (strain ATCC 700601 / ES114) (Vibrio fischeri), this protein is Enolase.